Here is a 429-residue protein sequence, read N- to C-terminus: D-inositol 3-phosphate glycosyltransferase (429 aa).

Histidine 20 lines the 1D-myo-inositol 3-phosphate pocket. UDP-N-acetyl-alpha-D-glucosamine contacts are provided by residues 26 to 27 (QP) and glycine 34. 1D-myo-inositol 3-phosphate contacts are provided by residues 31–36 (DAGGMN), lysine 89, tyrosine 122, threonine 146, and arginine 166. UDP-N-acetyl-alpha-D-glucosamine contacts are provided by arginine 240, lysine 245, and glutamine 306. Positions 315, 316, and 318 each coordinate Mg(2+). Glutamate 328 and glutamate 336 together coordinate UDP-N-acetyl-alpha-D-glucosamine. Residue threonine 342 participates in Mg(2+) binding.

The protein belongs to the glycosyltransferase group 1 family. MshA subfamily. As to quaternary structure, homodimer.

It carries out the reaction 1D-myo-inositol 3-phosphate + UDP-N-acetyl-alpha-D-glucosamine = 1D-myo-inositol 2-acetamido-2-deoxy-alpha-D-glucopyranoside 3-phosphate + UDP + H(+). Functionally, catalyzes the transfer of a N-acetyl-glucosamine moiety to 1D-myo-inositol 3-phosphate to produce 1D-myo-inositol 2-acetamido-2-deoxy-glucopyranoside 3-phosphate in the mycothiol biosynthesis pathway. In Nocardiopsis dassonvillei (strain ATCC 23218 / DSM 43111 / CIP 107115 / JCM 7437 / KCTC 9190 / NBRC 14626 / NCTC 10488 / NRRL B-5397 / IMRU 509) (Actinomadura dassonvillei), this protein is D-inositol 3-phosphate glycosyltransferase.